The following is a 306-amino-acid chain: MVKLVSLHISRSFIQSPLSRNQEWIDLTLDYAISTVTVAGKMSNTHWALRPFKGHFLPETADMSRQFTRARELLRPTLEARLQQRDKVPNDLMQWIINNYPDQEDDLTLHTRLQLEAVQAATYNLAIMQRPLDSSRVVELAEMRQLLEGVAKIEPDRDCERESLCTVTIPTPRWKHSAGWCLRLGTIYDDDSLWTDPTSFDGYRFEKLRTIKGNELKFQYASTSTSELNWGYGTHACPGRHYASNQIKLMIVSLLSRYEFQFDHEQTDKKAIVERPPNVVDGVRIMPNPQTLVMVRSLGNVNEGCE.

Heme is bound at residue Cys237.

The protein belongs to the cytochrome P450 family. Heme serves as cofactor.

It functions in the pathway mycotoxin biosynthesis. In terms of biological role, cytochrome P450 monooxygenase; part of the gene cluster that mediates the biosynthesis of aspirochlorine (or antibiotic A30641), an unusual halogenated spiro compound with distinctive antifungal properties due to selective inhibition of protein biosynthesis, and which is also active against bacteria, viruses, and murine tumor cells. The non-ribosomal peptide synthetase (NRPS) aclP is responsible the formation of the diketopiperazine (DKP) core from the condensation of 2 phenylalanine residues. One Phe residue is tailored into chlorotyrosine by hydroxylation and chlorination, whereas the second Phe undergoes an unprecedented C-C bond cleavage to be converted into glycine. After formation of the DKP, sulfur is incorporated into the DKP by conjugation with glutathione by aclG, followed by its stepwise degradation to the thiol by aclI, aclJ and aclK, and the dithiol oxidation by aclT. In addition, oxygenases (aclB, aclC, aclL and aclO) and O-methyltransferases (aclM and aclU) act as tailoring enzymes to produce the intermediate dechloroaspirochlorine. Ultimately, chlorination of dechloroaspirochlorine by the halogenase aclH is the last step in the aspirochlorine pathway. The chain is Cytochrome P450 monooxygenase aclO from Aspergillus oryzae (strain ATCC 42149 / RIB 40) (Yellow koji mold).